Here is a 443-residue protein sequence, read N- to C-terminus: Threonine/serine transporter TdcC (443 aa).

The next 11 membrane-spanning stretches (helical) occupy residues 22–42 (TTWT…FFPI), 44–64 (AGFG…PIAF), 97–117 (GVVI…IYGV), 140–160 (FVAL…KDLM), 163–183 (VMSY…LSLI), 207–227 (ILVT…FSPI), 259–279 (ASML…FTLS), 319–339 (ASII…LGTL), 366–386 (ISMI…PNIL), 389–409 (IEAM…MYAI), and 423–443 (DNVF…YKLF).

Belongs to the amino acid/polyamine transporter 2 family. SdaC/TdcC subfamily.

It is found in the cell inner membrane. The enzyme catalyses L-threonine(in) + H(+)(in) = L-threonine(out) + H(+)(out). It catalyses the reaction L-serine(in) + H(+)(in) = L-serine(out) + H(+)(out). Its function is as follows. Involved in the import of threonine and serine into the cell, with the concomitant import of a proton (symport system). The protein is Threonine/serine transporter TdcC of Salmonella paratyphi B (strain ATCC BAA-1250 / SPB7).